The primary structure comprises 670 residues: DNA ligase (670 aa).

NAD(+) is bound by residues 34-38, 83-84, and Glu112; these read DAEYD and SL. Lys114 serves as the catalytic N6-AMP-lysine intermediate. Positions 135, 169, 285, and 309 each coordinate NAD(+). Cys403, Cys406, Cys421, and Cys426 together coordinate Zn(2+). The 82-residue stretch at 589 to 670 folds into the BRCT domain; sequence PASSVLAGKT…FLQEISREEQ (82 aa).

Belongs to the NAD-dependent DNA ligase family. LigA subfamily. It depends on Mg(2+) as a cofactor. Requires Mn(2+) as cofactor.

The catalysed reaction is NAD(+) + (deoxyribonucleotide)n-3'-hydroxyl + 5'-phospho-(deoxyribonucleotide)m = (deoxyribonucleotide)n+m + AMP + beta-nicotinamide D-nucleotide.. Its function is as follows. DNA ligase that catalyzes the formation of phosphodiester linkages between 5'-phosphoryl and 3'-hydroxyl groups in double-stranded DNA using NAD as a coenzyme and as the energy source for the reaction. It is essential for DNA replication and repair of damaged DNA. This Geobacillus thermodenitrificans (strain NG80-2) protein is DNA ligase.